We begin with the raw amino-acid sequence, 382 residues long: MSLKEKTQSLFANAFGYPATHTIQAPGRVNLIGEHTDYNDGFVLPCAIDYQTVISCAPRDDRKVRVMAADYENQLDEFSLDAPIVAHENYQWANYVRGVVKHLQLRNNSFGGVDMVISGNVPQGAGLSSSASLEVAVGTVLQQLYHLPLDGAQIALNGQEAENQFVGCNCGIMDQLISALGKKDHALLIDCRSLGTKAVSMPKGVAVVIINSNFKRTLVGSEYNTRREQCETGARFFQQPALRDVTIEEFNAVAHELDPIVAKHVRHILTENARTVEAASALEQGDLKRMGELMAESHASMRDDFEITVPQIDTLVEIVKAVIGDKGGVRMTGGGFGGCIVALIPEELVPAVQQAVAEQYEAKTGIKETFYVCKPSQGAGQC.

34-37 lines the substrate pocket; that stretch reads EHTD. 124–130 contributes to the ATP binding site; it reads GAGLSSS. Mg(2+) contacts are provided by S130 and E162. Catalysis depends on D174, which acts as the Proton acceptor. Y223 contributes to the substrate binding site.

Belongs to the GHMP kinase family. GalK subfamily.

It is found in the cytoplasm. The catalysed reaction is alpha-D-galactose + ATP = alpha-D-galactose 1-phosphate + ADP + H(+). Its pathway is carbohydrate metabolism; galactose metabolism. Its function is as follows. Catalyzes the transfer of the gamma-phosphate of ATP to D-galactose to form alpha-D-galactose-1-phosphate (Gal-1-P). The sequence is that of Galactokinase from Shigella dysenteriae serotype 1 (strain Sd197).